The chain runs to 349 residues: tRNA pseudouridine synthase D (349 aa).

Residue Phe27 coordinates substrate. Asp80 acts as the Nucleophile in catalysis. Asn129 serves as a coordination point for substrate. The TRUD domain maps to Gly155 to Leu303. A substrate-binding site is contributed by Phe329.

Belongs to the pseudouridine synthase TruD family.

It carries out the reaction uridine(13) in tRNA = pseudouridine(13) in tRNA. Its function is as follows. Responsible for synthesis of pseudouridine from uracil-13 in transfer RNAs. The polypeptide is tRNA pseudouridine synthase D (Escherichia coli O6:H1 (strain CFT073 / ATCC 700928 / UPEC)).